The primary structure comprises 110 residues: Insulin (110 aa).

An N-terminal signal peptide occupies residues 1-24 (MALWMRLLPLLALLALWGPDPVPA). Cystine bridges form between cysteine 31–cysteine 96, cysteine 43–cysteine 109, and cysteine 95–cysteine 100. The propeptide at 57–87 (EAEDPQVGQVELGGGPGAGSLQPLALEGSLQ) is c peptide.

The protein belongs to the insulin family. In terms of assembly, heterodimer of a B chain and an A chain linked by two disulfide bonds.

It localises to the secreted. Insulin decreases blood glucose concentration. It increases cell permeability to monosaccharides, amino acids and fatty acids. It accelerates glycolysis, the pentose phosphate cycle, and glycogen synthesis in liver. This chain is Insulin (INS), found in Chlorocebus aethiops (Green monkey).